A 147-amino-acid polypeptide reads, in one-letter code: Hemoglobin subunit beta (147 aa).

Val-2 is subject to N-acetylvaline. The Globin domain occupies 3 to 147; the sequence is HLTGEEKSAV…VANALAHKYH (145 aa). Thr-13 carries the phosphothreonine modification. At Ser-45 the chain carries Phosphoserine. Lys-60 carries the N6-acetyllysine modification. Position 64 (His-64) interacts with heme b. Lys-83 carries the post-translational modification N6-acetyllysine. His-93 contributes to the heme b binding site. The residue at position 94 (Cys-94) is an S-nitrosocysteine. The residue at position 145 (Lys-145) is an N6-acetyllysine.

The protein belongs to the globin family. In terms of assembly, heterotetramer of two alpha chains and two beta chains. As to expression, red blood cells.

Its function is as follows. Involved in oxygen transport from the lung to the various peripheral tissues. The polypeptide is Hemoglobin subunit beta (HBB) (Ateles paniscus (Black spider monkey)).